A 129-amino-acid chain; its full sequence is Beta-galactoside-binding lectin (129 aa).

Ser-1 carries the N-acetylserine modification. The 126-residue stretch at 4 to 129 folds into the Galectin domain; it reads GVVDERMSFK…EARIYSIEIK (126 aa). 69-75 serves as a coordination point for a beta-D-galactoside; the sequence is WGTEQRE.

Its function is as follows. This protein binds beta-galactoside. Its physiological function is not yet known. This chain is Beta-galactoside-binding lectin, found in Electrophorus electricus (Electric eel).